A 296-amino-acid chain; its full sequence is uncharacterized protein (296 aa).

In terms of domain architecture, HTH lysR-type spans 1–60 (MDPKISYFQTFIVASKTKSFSKAAKRLGITQGTVSNHISALEKYFDAQLFLRTPEGVDLT). The H-T-H motif DNA-binding region spans 20-39 (FSKAAKRLGITQGTVSNHIS).

The protein belongs to the LysR transcriptional regulatory family.

This is an uncharacterized protein from Methanocaldococcus jannaschii (strain ATCC 43067 / DSM 2661 / JAL-1 / JCM 10045 / NBRC 100440) (Methanococcus jannaschii).